The chain runs to 45 residues: NLR family pyrin domain-containing protein 2B (45 aa).

As to expression, expressed in all tissues tested, including spleen, lymph node, thymus, tonsil, peripheral blood leukocyte, bone marrow, liver, heart, brain, placenta, lung, skeletal muscle, kidney and pancreas.

It is found in the cytoplasm. Its subcellular location is the nucleus. Functionally, may function as a negative regulator of NF-kappa-B by preventing RELA/p65 phosphorylation at 'Ser-536', thereby inhibiting its transcriptional activity. Through NF-kappa-B regulation may control cytokine release upon Toll-like receptors activation and therefore play a role in modulation of innate immunity. May also play a role in cell cycle progression and apoptotic process. This is NLR family pyrin domain-containing protein 2B from Homo sapiens (Human).